The following is a 155-amino-acid chain: Small ribosomal subunit protein uS7cz/uS7cy (155 aa).

The protein belongs to the universal ribosomal protein uS7 family. In terms of assembly, part of the 30S ribosomal subunit.

The protein localises to the plastid. It localises to the chloroplast. Its function is as follows. One of the primary rRNA binding proteins, it binds directly to 16S rRNA where it nucleates assembly of the head domain of the 30S subunit. The chain is Small ribosomal subunit protein uS7cz/uS7cy (rps7-A) from Guizotia abyssinica (Niger).